We begin with the raw amino-acid sequence, 329 residues long: MPLCNNFSGNLVVAVALFFAGALYIFNYQNYVNTLRTTQYPVDELEAALYTAAAGNNKTVIITMVNKAYVKEVGRGSTMLDLFLESFWEGEGTLPLLDHLMVVAVDQTAYDRCRFKRLHCYKMETEDGVDLEGEKVFMSKDFIEMMWRRTRLILDVLRRGYNVIFTDTDVMWLRSPLSRLNMSLDMQISVDRINVGGQLINTGFYHVRSNNKTISLFQKWYDMRLNSTGMKEQDVLKNLLDSGFFNQLGLNVGFLSTTEFSGFCQDSPHMGVVTTVHANCCLHIPAKVFDLTRVLRDWKRYKASHVNSKWSPHLKCSRSWNDTHYIPRL.

An N-terminal signal peptide occupies residues 1-22; that stretch reads MPLCNNFSGNLVVAVALFFAGA.

This is an uncharacterized protein from Arabidopsis thaliana (Mouse-ear cress).